The chain runs to 240 residues: UDP-2,3-diacylglucosamine hydrolase (240 aa).

Asp8, His10, Asp41, Asn79, and His114 together coordinate Mn(2+). 79–80 (NR) provides a ligand contact to substrate. Residues Asp122, Ser160, Asn164, Lys167, and His195 each coordinate substrate. The Mn(2+) site is built by His195 and His197.

The protein belongs to the LpxH family. The cofactor is Mn(2+).

It localises to the cell inner membrane. It carries out the reaction UDP-2-N,3-O-bis[(3R)-3-hydroxytetradecanoyl]-alpha-D-glucosamine + H2O = 2-N,3-O-bis[(3R)-3-hydroxytetradecanoyl]-alpha-D-glucosaminyl 1-phosphate + UMP + 2 H(+). The protein operates within glycolipid biosynthesis; lipid IV(A) biosynthesis; lipid IV(A) from (3R)-3-hydroxytetradecanoyl-[acyl-carrier-protein] and UDP-N-acetyl-alpha-D-glucosamine: step 4/6. Its function is as follows. Hydrolyzes the pyrophosphate bond of UDP-2,3-diacylglucosamine to yield 2,3-diacylglucosamine 1-phosphate (lipid X) and UMP by catalyzing the attack of water at the alpha-P atom. Involved in the biosynthesis of lipid A, a phosphorylated glycolipid that anchors the lipopolysaccharide to the outer membrane of the cell. This is UDP-2,3-diacylglucosamine hydrolase from Salmonella dublin (strain CT_02021853).